The chain runs to 583 residues: MAAAAVSESWPELELAERERRRELLLTGPGLEERVRAAGGQLPPRLFTLPLLHYLEVSGCGSLRAPGPGLAQGLPQLHSLVLRRNALGPGLSPELGPLPALRVLDLSGNALEALPPGQGLGPAEPPGLPQLQSLNLSGNRLRELPADLARCAPRLQSLNLTGNCLDSFPAELFRPGALPLLSELAAADNCLRELSPDIAHLASLKTLDLSNNQLSEIPAELADCPKLKEINFRGNKLRDKRLEKMVSGCQTRSILEYLRVGGRGGGKGKGRAEGSEKEESRRKRRERKQRREGGDGEEQDVGDAGRLLLRVLHVSENPVPLTVRVSPEVRDVRPYIVGAVVRGMDLQPGNALKRFLTSQTKLHEDLCEKRTAATLATHELRAVKGPLLYCARPPQDLKIVPLGRKEAKAKELVRQLQLEAEEQRKQKKRQSVSGLHRYLHLLDGNENYPCLVDADGDVISFPPITNSEKTKVKKTTSDLFLEVTSATSLQICKDVMDALILKMAEMKKYTLENKEEGSLSDTEADAVSGQLPDPTTNPSAGKDGPSLLVVEQVRVVDLEGSLKVVYPSKADLATAPPHVTVVR.

Position 2 is an N-acetylalanine (A2). 7 LRR repeats span residues 76 to 95, 100 to 121, 130 to 152, 154 to 175, 180 to 202, 203 to 225, and 226 to 246; these read QLHS…SPEL, ALRV…QGLG, QLQS…ARCA, RLQS…LFRP, LLSE…AHLA, SLKT…ADCP, and KLKE…EKMV. Residues 260–300 are disordered; the sequence is VGGRGGGKGKGRAEGSEKEESRRKRRERKQRREGGDGEEQD. The span at 270–281 shows a compositional bias: basic and acidic residues; it reads GRAEGSEKEESR. A phosphoserine mark is found at S315 and S431. A coiled-coil region spans residues 402–437; sequence LGRKEAKAKELVRQLQLEAEEQRKQKKRQSVSGLHR. At Y509 the chain carries Phosphotyrosine. The interval 513-544 is disordered; it reads NKEEGSLSDTEADAVSGQLPDPTTNPSAGKDG. Phosphoserine occurs at positions 518 and 520.

The chain is Leucine-rich repeat-containing protein 47 (LRRC47) from Homo sapiens (Human).